The primary structure comprises 181 residues: HGPRTase-like protein 2 (181 aa).

It belongs to the purine/pyrimidine phosphoribosyltransferase family. Archaeal HPRT subfamily.

Functionally, may catalyze a purine salvage reaction, the substrate is unknown. The chain is HGPRTase-like protein 2 from Haloquadratum walsbyi (strain DSM 16854 / JCM 12705 / C23).